The sequence spans 197 residues: Glycerol-3-phosphate acyltransferase (197 aa).

6 consecutive transmembrane segments (helical) span residues 1 to 21, 50 to 70, 77 to 97, 111 to 131, 137 to 157, and 158 to 178; these read MNIL…GFLI, WPAL…VKIA, GLIE…PIWL, MFLA…LIVL, VSLS…FYLG, and KFMH…IWKH.

It belongs to the PlsY family. As to quaternary structure, probably interacts with PlsX.

It is found in the cell inner membrane. The enzyme catalyses an acyl phosphate + sn-glycerol 3-phosphate = a 1-acyl-sn-glycero-3-phosphate + phosphate. Its pathway is lipid metabolism; phospholipid metabolism. Functionally, catalyzes the transfer of an acyl group from acyl-phosphate (acyl-PO(4)) to glycerol-3-phosphate (G3P) to form lysophosphatidic acid (LPA). This enzyme utilizes acyl-phosphate as fatty acyl donor, but not acyl-CoA or acyl-ACP. The chain is Glycerol-3-phosphate acyltransferase from Prochlorococcus marinus (strain MIT 9301).